The sequence spans 792 residues: Xaa-Pro dipeptidyl-peptidase (792 aa).

Active-site charge relay system residues include serine 363, aspartate 482, and histidine 513.

This sequence belongs to the peptidase S15 family. As to quaternary structure, homodimer.

It localises to the cytoplasm. It catalyses the reaction Hydrolyzes Xaa-Pro-|- bonds to release unblocked, N-terminal dipeptides from substrates including Ala-Pro-|-p-nitroanilide and (sequentially) Tyr-Pro-|-Phe-Pro-|-Gly-Pro-|-Ile.. Removes N-terminal dipeptides sequentially from polypeptides having unsubstituted N-termini provided that the penultimate residue is proline. This Lactobacillus delbrueckii subsp. bulgaricus (strain ATCC 11842 / DSM 20081 / BCRC 10696 / JCM 1002 / NBRC 13953 / NCIMB 11778 / NCTC 12712 / WDCM 00102 / Lb 14) protein is Xaa-Pro dipeptidyl-peptidase.